Here is a 70-residue protein sequence, read N- to C-terminus: MSRKMTGIVKTFDRKSGKGFIIPSDGRKEVQVHISAFTPRDAEVLIPGLRVEFCRVNGLRGPTAANVYLS.

The CSD domain occupies G7 to V67.

The protein localises to the cytoplasm. In Escherichia coli O6:H1 (strain CFT073 / ATCC 700928 / UPEC), this protein is Cold shock-like protein CspH (cspH).